A 415-amino-acid polypeptide reads, in one-letter code: MNFFQYKHNKLYAEDMPVQQLAEQFGTPLYVYSRATLERHWHAFDSAFGNRPHLICFAVKSCSNIGVLNIMAKLGSGFDIVSQGELERVLAAGGDASKVVFSGVAKSREEIMRALEVRIRCFNVESVSELKHINQIAGEMGKIAPISLRVNPDVDAHTHPYISTGLKENKFGVSVNEAREVYKLASTLPNIKITGMDCHIGSQLTELQPFLDATDRLIVLMEQLKEDGITLKHLDLGGGLGVTYTDETPPHPSDYANALLEKLKNYPELEIILEPGRAISANAGILVAKVQYLKSNESRNFAITDTGMNDMIRPALYEAYMNIVEIDRTLEREKAIYDVVGPVCETSDFLGKQRELSIAEGDYIAQCSAGAYGASMSSNYNSRARTAEVLVDGDQSYLIRRRETLQELWALESTI.

Lys-60 carries the N6-(pyridoxal phosphate)lysine modification. Residues Gly-239 and 274-277 (EPGR) contribute to the pyridoxal 5'-phosphate site. 3 residues coordinate substrate: Arg-277, Arg-313, and Tyr-317. Residue Cys-344 is the Proton donor of the active site. The substrate site is built by Glu-345 and Tyr-372. A pyridoxal 5'-phosphate-binding site is contributed by Tyr-372.

The protein belongs to the Orn/Lys/Arg decarboxylase class-II family. LysA subfamily. As to quaternary structure, homodimer. Pyridoxal 5'-phosphate is required as a cofactor.

The enzyme catalyses meso-2,6-diaminopimelate + H(+) = L-lysine + CO2. It participates in amino-acid biosynthesis; L-lysine biosynthesis via DAP pathway; L-lysine from DL-2,6-diaminopimelate: step 1/1. In terms of biological role, specifically catalyzes the decarboxylation of meso-diaminopimelate (meso-DAP) to L-lysine. In Haemophilus influenzae (strain ATCC 51907 / DSM 11121 / KW20 / Rd), this protein is Diaminopimelate decarboxylase.